The primary structure comprises 406 residues: Putative ankyrin repeat protein RF_0266 (406 aa).

ANK repeat units follow at residues 68 to 98, 103 to 129, 130 to 161, 163 to 189, and 203 to 232; these read TSHS…DINN, NYIT…QDDI, KVQN…IIKP, HIEL…DIEK, and SIDC…KPEQ.

The sequence is that of Putative ankyrin repeat protein RF_0266 from Rickettsia felis (strain ATCC VR-1525 / URRWXCal2) (Rickettsia azadi).